We begin with the raw amino-acid sequence, 451 residues long: Phosphoglucosamine mutase (451 aa).

The active-site Phosphoserine intermediate is the Ser101. Ser101, Asp240, Asp242, and Asp244 together coordinate Mg(2+). The residue at position 101 (Ser101) is a Phosphoserine.

It belongs to the phosphohexose mutase family. Mg(2+) is required as a cofactor. Activated by phosphorylation.

It carries out the reaction alpha-D-glucosamine 1-phosphate = D-glucosamine 6-phosphate. Functionally, catalyzes the conversion of glucosamine-6-phosphate to glucosamine-1-phosphate. This chain is Phosphoglucosamine mutase, found in Streptococcus pyogenes serotype M3 (strain SSI-1).